The primary structure comprises 243 residues: VQ motif-containing protein 33 (243 aa).

Positions 1 to 16 are enriched in polar residues; the sequence is MEVSTSSMSSKPEQMQ. The tract at residues 1-49 is disordered; that stretch reads MEVSTSSMSSKPEQMQNPPPMISSPRFQPQIISPHHHDQHQHLSNPYPT. The VQ motif lies at 59–68; the sequence is FKQVVQMLTG. Disordered stretches follow at residues 69–98 and 138–162; these read SSTDTTTGKHHEAPSPVNNNNKGSSFSIPP and FTGGNSSHHQSPRFSPRNSSSSENI. Residues S83 and S95 each carry the phosphoserine modification. The segment covering 84–98 has biased composition (polar residues); it reads PVNNNNKGSSFSIPP. T139 carries the phosphothreonine modification. 5 positions are modified to phosphoserine: S148, S152, S165, S167, and S178. The segment covering 149–162 has biased composition (low complexity); that stretch reads PRFSPRNSSSSENI. Residues 180 to 243 are disordered; it reads VTPLRSNDDP…FPVASPARNS (64 aa). Residue T181 is modified to Phosphothreonine. The span at 191–201 shows a compositional bias: polar residues; sequence NKSSPLSLGNS. Phosphoserine is present on residues S218 and S221. Position 222 is a phosphothreonine (T222). Phosphoserine is present on S238.

In terms of processing, phosphorylated on serine and threonine residues by MPK6.

The protein localises to the nucleus. May modulate WRKY transcription factor activities. The polypeptide is VQ motif-containing protein 33 (Arabidopsis thaliana (Mouse-ear cress)).